We begin with the raw amino-acid sequence, 708 residues long: B-cell lymphoma 6 protein homolog (708 aa).

A BTB domain is found at 32 to 99 (TDVVIIVNRE…MYTSRLNLRE (68 aa)). Over residues 303–317 (AKEEERTSSEDEISQ) the composition is skewed to basic and acidic residues. Disordered regions lie at residues 303 to 371 (AKEE…KSPT) and 431 to 470 (PTKM…QSPL). Polar residues-rich tracts occupy residues 333 to 370 (SPQS…TKSP) and 431 to 454 (PTKM…NIVN). C2H2-type zinc fingers lie at residues 520–543 (FFCN…LQVH), 548–570 (YKCD…KTVH), 576–598 (YRCN…TRIH), 604–626 (YKCE…VLIH), 632–654 (YPCE…LRIH), and 660–683 (YHCE…RQKH).

The protein localises to the nucleus. Transcriptional repressor mainly required for germinal center (GC) formation and antibody affinity maturation which has different mechanisms of action specific to the lineage and biological functions. Forms complexes with different corepressors and histone deacetylases to repress the transcriptional expression of different subsets of target genes. Represses its target genes by binding directly to the DNA sequence 5'-TTCCTAGAA-3' (BCL6-binding site) or indirectly by repressing the transcriptional activity of transcription factors. In GC B-cells, represses genes that function in differentiation, inflammation, apoptosis and cell cycle control, also autoregulates its transcriptional expression and up-regulates, indirectly, the expression of some genes important for GC reactions, such as AICDA, through the repression of microRNAs expression. An important function is to allow GC B-cells to proliferate very rapidly in response to T-cell dependent antigens and tolerate the physiological DNA breaks required for immunglobulin class switch recombination and somatic hypermutation without inducing a p53/TP53-dependent apoptotic response. In follicular helper CD4(+) T-cells (T(FH) cells), promotes the expression of T(FH)-related genes but inhibits the differentiation of T(H)1, T(H)2 and T(H)17 cells. Also required for the establishment and maintenance of immunological memory for both T- and B-cells. Suppresses macrophage proliferation through competition with STAT5 for STAT-binding motifs binding on certain target genes, such as CCL2 and CCND2. In response to genotoxic stress, controls cell cycle arrest in GC B-cells in both p53/TP53-dependedent and -independent manners. Besides, also controls neurogenesis through the alteration of the composition of NOTCH-dependent transcriptional complexes at selective NOTCH targets, such as HES5, including the recruitment of the deacetylase SIRT1 and resulting in an epigenetic silencing leading to neuronal differentiation. In Gallus gallus (Chicken), this protein is B-cell lymphoma 6 protein homolog.